A 155-amino-acid polypeptide reads, in one-letter code: SsrA-binding protein (155 aa).

Belongs to the SmpB family.

The protein resides in the cytoplasm. Its function is as follows. Required for rescue of stalled ribosomes mediated by trans-translation. Binds to transfer-messenger RNA (tmRNA), required for stable association of tmRNA with ribosomes. tmRNA and SmpB together mimic tRNA shape, replacing the anticodon stem-loop with SmpB. tmRNA is encoded by the ssrA gene; the 2 termini fold to resemble tRNA(Ala) and it encodes a 'tag peptide', a short internal open reading frame. During trans-translation Ala-aminoacylated tmRNA acts like a tRNA, entering the A-site of stalled ribosomes, displacing the stalled mRNA. The ribosome then switches to translate the ORF on the tmRNA; the nascent peptide is terminated with the 'tag peptide' encoded by the tmRNA and targeted for degradation. The ribosome is freed to recommence translation, which seems to be the essential function of trans-translation. The protein is SsrA-binding protein of Streptococcus pneumoniae (strain Hungary19A-6).